Consider the following 94-residue polypeptide: MSCEILRKLEEVIRRRIEEKNPESYTYRLYSSGIHNVARKVGEEAVEVAVAALAEGKSRIVEEAADLLYHLLVLLNSTGLSLGDVCAELERRMR.

It belongs to the PRA-PH family.

It is found in the cytoplasm. It carries out the reaction 1-(5-phospho-beta-D-ribosyl)-ATP + H2O = 1-(5-phospho-beta-D-ribosyl)-5'-AMP + diphosphate + H(+). Its pathway is amino-acid biosynthesis; L-histidine biosynthesis; L-histidine from 5-phospho-alpha-D-ribose 1-diphosphate: step 2/9. The sequence is that of Phosphoribosyl-ATP pyrophosphatase from Pyrobaculum islandicum (strain DSM 4184 / JCM 9189 / GEO3).